The chain runs to 302 residues: Riboflavin transporter (302 aa).

The next 8 helical transmembrane spans lie at 16-36 (AVVG…LNVV), 44-64 (LAFP…LFSL), 87-107 (VVLA…VPIW), 109-129 (AIAL…LFLG), 158-178 (IGWA…SSLI), 191-213 (ITVW…AGFA), 227-247 (GLLT…ADAA), and 264-284 (GWLF…ALIL). 2 consecutive EamA domains span residues 30–151 (FSLL…MIIL) and 170–291 (LLWG…LFIM).

It belongs to the drug/metabolite transporter (DMT) superfamily. 10 TMS drug/metabolite exporter (DME) (TC 2.A.7.3) family.

Its subcellular location is the cell membrane. In terms of biological role, transports riboflavin into the cell. Can also transport FMN and FAD. Required for normal nodule development during colonization of pea plant roots. This is Riboflavin transporter from Rhizobium johnstonii (strain DSM 114642 / LMG 32736 / 3841) (Rhizobium leguminosarum bv. viciae).